Reading from the N-terminus, the 358-residue chain is Alanine racemase (358 aa).

Lysine 35 functions as the Proton acceptor; specific for D-alanine in the catalytic mechanism. Lysine 35 is modified (N6-(pyridoxal phosphate)lysine). Residue arginine 130 coordinates substrate. Tyrosine 255 serves as the catalytic Proton acceptor; specific for L-alanine. A substrate-binding site is contributed by methionine 303.

Belongs to the alanine racemase family. The cofactor is pyridoxal 5'-phosphate.

The catalysed reaction is L-alanine = D-alanine. It participates in amino-acid biosynthesis; D-alanine biosynthesis; D-alanine from L-alanine: step 1/1. Its function is as follows. Catalyzes the interconversion of L-alanine and D-alanine. May also act on other amino acids. The sequence is that of Alanine racemase (alr) from Shewanella sp. (strain W3-18-1).